A 556-amino-acid chain; its full sequence is Arginine--tRNA ligase (556 aa).

The 'HIGH' region signature appears at 132–142 (ANPTGDLHLGH).

The protein belongs to the class-I aminoacyl-tRNA synthetase family. In terms of assembly, monomer.

The protein resides in the cytoplasm. The catalysed reaction is tRNA(Arg) + L-arginine + ATP = L-arginyl-tRNA(Arg) + AMP + diphosphate. The sequence is that of Arginine--tRNA ligase from Listeria monocytogenes serotype 4b (strain CLIP80459).